Reading from the N-terminus, the 900-residue chain is DNA mismatch repair protein MutS (900 aa).

637–644 (GPNMAGKS) contacts ATP.

Belongs to the DNA mismatch repair MutS family.

This protein is involved in the repair of mismatches in DNA. It is possible that it carries out the mismatch recognition step. This protein has a weak ATPase activity. The chain is DNA mismatch repair protein MutS from Methanosarcina acetivorans (strain ATCC 35395 / DSM 2834 / JCM 12185 / C2A).